Reading from the N-terminus, the 608-residue chain is Elongation factor 4 (608 aa).

The tr-type G domain maps to 11–193; the sequence is KKIRNFSIIA…QIVEKVPEPS (183 aa). Residues 23-28 and 140-143 contribute to the GTP site; these read DHGKST and NKID.

Belongs to the TRAFAC class translation factor GTPase superfamily. Classic translation factor GTPase family. LepA subfamily.

Its subcellular location is the cell membrane. The enzyme catalyses GTP + H2O = GDP + phosphate + H(+). Required for accurate and efficient protein synthesis under certain stress conditions. May act as a fidelity factor of the translation reaction, by catalyzing a one-codon backward translocation of tRNAs on improperly translocated ribosomes. Back-translocation proceeds from a post-translocation (POST) complex to a pre-translocation (PRE) complex, thus giving elongation factor G a second chance to translocate the tRNAs correctly. Binds to ribosomes in a GTP-dependent manner. This chain is Elongation factor 4, found in Listeria innocua serovar 6a (strain ATCC BAA-680 / CLIP 11262).